We begin with the raw amino-acid sequence, 147 residues long: Hemoglobin subunit beta (147 aa).

Residues 3 to 147 (EWTDKERSII…VVSALGKQYH (145 aa)) enclose the Globin domain. Residues histidine 64 and histidine 93 each coordinate heme b.

It belongs to the globin family. As to quaternary structure, hb1 is a heterotetramer of two alpha chains and two beta chains. As to expression, red blood cells.

Functionally, involved in oxygen transport from gills to the various peripheral tissues. This Trematomus bernacchii (Emerald rockcod) protein is Hemoglobin subunit beta (hbb).